The sequence spans 152 residues: SKP1-like protein 8 (152 aa).

Residues Thr94–Glu152 form an interaction with the F-box domain of F-box proteins region.

This sequence belongs to the SKP1 family. Part of a SCF (SKP1-cullin-F-box) protein ligase complex. In terms of tissue distribution, restricted to siliques.

The protein localises to the nucleus. The protein operates within protein modification; protein ubiquitination. Involved in ubiquitination and subsequent proteasomal degradation of target proteins. Together with CUL1, RBX1 and a F-box protein, it forms a SCF E3 ubiquitin ligase complex. The functional specificity of this complex depends on the type of F-box protein. In the SCF complex, it serves as an adapter that links the F-box protein to CUL1. In Arabidopsis thaliana (Mouse-ear cress), this protein is SKP1-like protein 8 (ASK8).